We begin with the raw amino-acid sequence, 284 residues long: Bifunctional protein FolD (284 aa).

Residues glycine 165–serine 167, serine 190, and isoleucine 231 contribute to the NADP(+) site.

Belongs to the tetrahydrofolate dehydrogenase/cyclohydrolase family. As to quaternary structure, homodimer.

It catalyses the reaction (6R)-5,10-methylene-5,6,7,8-tetrahydrofolate + NADP(+) = (6R)-5,10-methenyltetrahydrofolate + NADPH. The enzyme catalyses (6R)-5,10-methenyltetrahydrofolate + H2O = (6R)-10-formyltetrahydrofolate + H(+). It participates in one-carbon metabolism; tetrahydrofolate interconversion. Its function is as follows. Catalyzes the oxidation of 5,10-methylenetetrahydrofolate to 5,10-methenyltetrahydrofolate and then the hydrolysis of 5,10-methenyltetrahydrofolate to 10-formyltetrahydrofolate. This Bordetella avium (strain 197N) protein is Bifunctional protein FolD.